A 515-amino-acid polypeptide reads, in one-letter code: 2,3-bisphosphoglycerate-independent phosphoglycerate mutase (515 aa).

D14 and S64 together coordinate Mn(2+). S64 (phosphoserine intermediate) is an active-site residue. Residues H125, 155–156, R187, R193, 263–266, and K337 each bind substrate; these read RD and RADR. Positions 404, 408, 445, 446, and 464 each coordinate Mn(2+).

It belongs to the BPG-independent phosphoglycerate mutase family. As to quaternary structure, monomer. Mn(2+) is required as a cofactor.

It catalyses the reaction (2R)-2-phosphoglycerate = (2R)-3-phosphoglycerate. It participates in carbohydrate degradation; glycolysis; pyruvate from D-glyceraldehyde 3-phosphate: step 3/5. Functionally, catalyzes the interconversion of 2-phosphoglycerate and 3-phosphoglycerate. The polypeptide is 2,3-bisphosphoglycerate-independent phosphoglycerate mutase (Yersinia pseudotuberculosis serotype I (strain IP32953)).